A 589-amino-acid chain; its full sequence is MALATQSNRIKIGIRPTIDGRRMGVRESLETQTIRMAQSVAQLLQTHIRHTDGTFVECVVADSTIGGVAEAAACADKFKRENVGLTITVTPCWCYGSETIDMDPHMPKAIWGFNGTERPGAVYLAAALAGHSQLGLPAFSIYGTEVQEADDTNIPEDVKEKLLRFARAGLAVASIRGKSYLSIGSVSMGIAGSIVNQAFFQEYLGMRNEYVDMMEIKRRLDRKIYDQEEVDLALSWVKQYCKEGVDVNSLENQRNAEERAELWENVVKMTIITRDLMVGNPKLATLNYAEEALGHNAIAAGFQGQRHWTDHLPNGDFMEAMLNSTYDWNGVRPPYILATENDSLNAIGMLFGHQLTGKAQIFADVRTYWSQDSVERVTGWRPESGFIHLINSGSAALDGTGEHQDAQGNPTLKPAWDVTEEEAKRCLENTRWCPAVHEYFRGGGLSSQFLTKGGIPFTIHRINLIKGLGPVLQIAEGWSIDLPQDVHNKLNQRTNETWPTTWFVPRLTGKGAFTDVYSVMANWGANHCVATHGHVGADLITLASMLRIPVCMHNVSEKNIFRPSAWNGFGQDKEGQDYRACQNFGPLYK.

Residues Glu-340 and Asp-364 each act as proton acceptor in the active site. Glu-340, Asp-364, and His-527 together coordinate Mn(2+).

This sequence belongs to the L-fucose isomerase family. It depends on Mn(2+) as a cofactor.

The protein resides in the cytoplasm. It catalyses the reaction L-fucose = L-fuculose. Its pathway is carbohydrate degradation; L-fucose degradation; L-lactaldehyde and glycerone phosphate from L-fucose: step 1/3. In terms of biological role, converts the aldose L-fucose into the corresponding ketose L-fuculose. This chain is L-fucose isomerase, found in Haemophilus influenzae (strain ATCC 51907 / DSM 11121 / KW20 / Rd).